Here is a 385-residue protein sequence, read N- to C-terminus: SSTETPPSYNQLNYNENLLRFFNSKPVTAPVPVELDPPKVESSYVSSAREDARSTLSPVQGFEGSGGSGSSGNFTTGSNLHMSSVTNTSNAGTGTSGTGNSGDGGGGGAGDGPGSGAVPPVTLTESLLNKHNDEMEKFMLKNDRESRGWSGEKNKKSANDTLKMVEYSGPGPGHGHGIKRGGSHSWEGEANKPKQQLTLNAGGMPPLVDIHASSSSLSKCQTSVAGGGGGGGAGSASGTCGTGNNGAGGGGGSNAQSSTNQYTQSGLSCTQNINLWPPFSVGITTPTSVLSTHMAVAQSSFSPQHSLFPTFYYIPASIAASSPASGTSPNPRPHKHTHVHPSSEQPSTSQGAAATMPLQYMTGVMYPHPSLFYTHPAAAAATAMV.

3 disordered regions span residues 28–121 (TAPV…VPPV), 169–189 (GPGP…WEGE), and 322–351 (SPAS…TSQG). Residues 71-93 (SGNFTTGSNLHMSSVTNTSNAGT) show a composition bias toward low complexity. The span at 94-115 (GTSGTGNSGDGGGGGAGDGPGS) shows a compositional bias: gly residues. A compositionally biased stretch (polar residues) spans 340–351 (HPSSEQPSTSQG).

Forms a heterodimer with timeless (TIM); the complex then translocates into the nucleus. Post-translationally, phosphorylated with a circadian rhythmicity, probably by the double-time protein (dbt). Phosphorylation could be implicated in the stability of per monomer and in the formation of heterodimer per-tim.

The protein localises to the nucleus. The protein resides in the cytoplasm. It is found in the perinuclear region. Functionally, essential for biological clock functions. Determines the period length of circadian and ultradian rhythms; an increase in PER dosage leads to shortened circadian rhythms and a decrease leads to lengthened circadian rhythms. Essential for the circadian rhythmicity of locomotor activity, eclosion behavior, and for the rhythmic component of the male courtship song that originates in the thoracic nervous system. The biological cycle depends on the rhythmic formation and nuclear localization of the TIM-PER complex. Light induces the degradation of TIM, which promotes elimination of PER. Nuclear activity of the heterodimer coordinatively regulates PER and TIM transcription through a negative feedback loop. Behaves as a negative element in circadian transcriptional loop. Does not appear to bind DNA, suggesting indirect transcriptional inhibition. In Drosophila nebulosa (Fruit fly), this protein is Period circadian protein (per).